A 201-amino-acid chain; its full sequence is Putative ankyrin repeat protein R868 (201 aa).

2 ANK repeats span residues tyrosine 125–phenylalanine 154 and lysine 156–phenylalanine 188.

This chain is Putative ankyrin repeat protein R868, found in Acanthamoeba polyphaga (Amoeba).